Consider the following 184-residue polypeptide: Small ribosomal subunit protein eS8 (184 aa).

The interval 1–23 is disordered; it reads MGISRDSRHKRRLTGGRYPVHKK. A compositionally biased stretch (basic residues) spans 7-23; that stretch reads SRHKRRLTGGRYPVHKK.

The protein belongs to the eukaryotic ribosomal protein eS8 family.

This is Small ribosomal subunit protein eS8 (RPS8) from Theileria annulata.